The following is a 206-amino-acid chain: Uracil phosphoribosyltransferase (206 aa).

Residues Arg-76, Arg-101, and 128–136 contribute to the 5-phospho-alpha-D-ribose 1-diphosphate site; that span reads DPMLATGGS. Residues Ile-191 and 196 to 198 each bind uracil; that span reads GDA. Residue Asp-197 participates in 5-phospho-alpha-D-ribose 1-diphosphate binding.

The protein belongs to the UPRTase family. The cofactor is Mg(2+).

It catalyses the reaction UMP + diphosphate = 5-phospho-alpha-D-ribose 1-diphosphate + uracil. It participates in pyrimidine metabolism; UMP biosynthesis via salvage pathway; UMP from uracil: step 1/1. Allosterically activated by GTP. Functionally, catalyzes the conversion of uracil and 5-phospho-alpha-D-ribose 1-diphosphate (PRPP) to UMP and diphosphate. The protein is Uracil phosphoribosyltransferase of Malacoplasma penetrans (strain HF-2) (Mycoplasma penetrans).